The primary structure comprises 240 residues: Probable septum site-determining protein MinC (240 aa).

The protein belongs to the MinC family. As to quaternary structure, interacts with MinD and FtsZ.

Functionally, cell division inhibitor that blocks the formation of polar Z ring septums. Rapidly oscillates between the poles of the cell to destabilize FtsZ filaments that have formed before they mature into polar Z rings. Prevents FtsZ polymerization. In Aeromonas hydrophila subsp. hydrophila (strain ATCC 7966 / DSM 30187 / BCRC 13018 / CCUG 14551 / JCM 1027 / KCTC 2358 / NCIMB 9240 / NCTC 8049), this protein is Probable septum site-determining protein MinC.